We begin with the raw amino-acid sequence, 120 residues long: UPF0231 protein YacL (120 aa).

It belongs to the UPF0231 family.

This Salmonella paratyphi A (strain ATCC 9150 / SARB42) protein is UPF0231 protein YacL.